Reading from the N-terminus, the 362-residue chain is Heat-inducible transcription repressor HrcA (362 aa).

The protein belongs to the HrcA family.

Its function is as follows. Negative regulator of class I heat shock genes (grpE-dnaK-dnaJ and groELS operons). Prevents heat-shock induction of these operons. The polypeptide is Heat-inducible transcription repressor HrcA (Bradyrhizobium sp. (strain BTAi1 / ATCC BAA-1182)).